A 224-amino-acid polypeptide reads, in one-letter code: Probable mitochondrial import inner membrane translocase subunit Tim17 4 (224 aa).

The next 3 membrane-spanning stretches (helical) occupy residues 16 to 36, 60 to 80, and 115 to 135; these read CGCA…LKGF, AIAG…CVMV, and AFVG…VATI.

This sequence belongs to the Tim17/Tim22/Tim23 family. Component of the TIM23 complex at least composed of Tim23, Tim17 (Tim17a1, Tim17a2 or Tim17b1) and a Tim50. The complex interacts with the Tim44 component of the PAM complex.

It localises to the mitochondrion inner membrane. In terms of biological role, essential component of the TIM23 complex, a complex that mediates the translocation of transit peptide-containing proteins across the mitochondrial inner membrane. This chain is Probable mitochondrial import inner membrane translocase subunit Tim17 4 (Tim17a2), found in Drosophila melanogaster (Fruit fly).